The primary structure comprises 608 residues: Serine/threonine-protein kinase SSN3 (608 aa).

Residues 1–72 (MSYSSASFRK…PGTVGTRTSI (72 aa)) form a disordered region. The span at 17–47 (SQPSQTTTTTTSANQPQSQSQQQPLQQSQQQ) shows a compositional bias: low complexity. The span at 49 to 59 (LHMKPNPHIPH) shows a compositional bias: basic residues. Residues 104–492 (YQIMGYIAAG…ADQALLHPYF (389 aa)) enclose the Protein kinase domain. Residues 110-118 (IAAGTYGKV) and K182 contribute to the ATP site. Catalysis depends on D307, which acts as the Proton acceptor. A disordered region spans residues 523 to 608 (MTTAANNNNN…LPGGIRKKRG (86 aa)). Residues 528–583 (NNNNNNNNNNNNNNNNNNNNNNNNNNNSGHQLSQQQNVQIQQVHQMQQQIHSQQLQ) show a composition bias toward low complexity.

It belongs to the protein kinase superfamily. CMGC Ser/Thr protein kinase family. CDC2/CDKX subfamily. Component of the SRB8-11 complex, a regulatory module of the Mediator complex. It depends on Mg(2+) as a cofactor.

The protein resides in the nucleus. It catalyses the reaction L-seryl-[protein] + ATP = O-phospho-L-seryl-[protein] + ADP + H(+). It carries out the reaction L-threonyl-[protein] + ATP = O-phospho-L-threonyl-[protein] + ADP + H(+). The enzyme catalyses [DNA-directed RNA polymerase] + ATP = phospho-[DNA-directed RNA polymerase] + ADP + H(+). Functionally, component of the SRB8-11 complex. The SRB8-11 complex is a regulatory module of the Mediator complex which is itself involved in regulation of basal and activated RNA polymerase II-dependent transcription. The SRB8-11 complex may be involved in the transcriptional repression of a subset of genes regulated by Mediator. It may inhibit the association of the Mediator complex with RNA polymerase II to form the holoenzyme complex. The SRB8-11 complex phosphorylates the C-terminal domain (CTD) of the largest subunit of RNA polymerase II. The sequence is that of Serine/threonine-protein kinase SSN3 (SSN3) from Candida albicans (strain SC5314 / ATCC MYA-2876) (Yeast).